A 483-amino-acid polypeptide reads, in one-letter code: Protein EFFECTOR OF TRANSCRIPTION 2 (483 aa).

The GIY-YIG domain occupies 64-112 (SCPGLYELGVAVIGQEQCRKLEPDIVLASYLGQAESVRSRLQRYGRSGA). Cx9Cx9RCx2HK repeat units lie at residues 278–303 (CGVLLEDGGCCIRSPVKGRKRCIEHK) and 338–363 (CGVILPDMEPCNKRPVPGRKRCEDHK). Positions 380 to 396 (EKTVKDEKPDPESHTES) are enriched in basic and acidic residues. The disordered stretch occupies residues 380 to 399 (EKTVKDEKPDPESHTESIEE). Cx9Cx9RCx2HK repeat units follow at residues 406-431 (CEATTKNGLPCTRSSPKGSKRCWQHK) and 453-478 (CGVKLGNGLICERSPVKGRKRCEEHK).

As to expression, expressed in vascular tissues of stems, hypocotyls, leaves and flowers. Expressed in the vascular bundles of xylem in shoot parenchyma cells. Expressed in the remnant cytoplasm of differentiated fiber cells and in protoxylem element of parenchymal cells.

The protein localises to the cytoplasm. It is found in the nucleus. Transcriptional regulator involved in the regulation of cell differentiation in meristems. Probably regulates the expression of various KNAT genes involved in the maintenance of the cells in an undifferentiated, merismastic state. Plays a role in the regulation of gibberellin 20 oxidase and the gibberellin-regulated protein GASA4. Localizes in the nucleus during the cellular differentiation state and may act via a single strand cutting domain. Transcriptional regulator required for the induction of dormancy during late seed development. Interacts genetically with FUS3 and may be component of the same regulatory pathway during embryogenesis. Binds both linear and supercoiled DNA without sequence preference. The protein is Protein EFFECTOR OF TRANSCRIPTION 2 of Arabidopsis thaliana (Mouse-ear cress).